A 280-amino-acid polypeptide reads, in one-letter code: Chaperone protein LppX (280 aa).

Residues Met1–Ala18 form the signal peptide. Cys19 carries the N-palmitoyl cysteine lipid modification. Residue Cys19 is the site of S-diacylglycerol cysteine attachment.

Its subcellular location is the cell membrane. In terms of biological role, is required for the expression of the adjacently encoded xylanase Xyn11E in an active form. LppX seems to act as a specific chaperone necessary for the correct folding of the xylanase during secretion across the cytoplasmic membrane. The sequence is that of Chaperone protein LppX from Paenibacillus barcinonensis.